The following is a 275-amino-acid chain: Rhamnulose-1-phosphate aldolase (275 aa).

Residue glutamate 117 is part of the active site. The Zn(2+) site is built by histidine 141, histidine 143, and histidine 212.

It belongs to the aldolase class II family. RhaD subfamily. As to quaternary structure, homotetramer. The cofactor is Zn(2+).

The protein resides in the cytoplasm. It carries out the reaction L-rhamnulose 1-phosphate = (S)-lactaldehyde + dihydroxyacetone phosphate. Its pathway is carbohydrate degradation; L-rhamnose degradation; glycerone phosphate from L-rhamnose: step 3/3. Catalyzes the reversible cleavage of L-rhamnulose-1-phosphate to dihydroxyacetone phosphate (DHAP) and L-lactaldehyde. This chain is Rhamnulose-1-phosphate aldolase, found in Salmonella paratyphi B (strain ATCC BAA-1250 / SPB7).